The chain runs to 216 residues: Homologous-pairing protein 2 (216 aa).

Belongs to the HOP2 family. In terms of assembly, interacts with mcp7.

It localises to the nucleus. Functionally, required for proper homologous pairing and efficient cross-over and intragenic recombination during meiosis. Acts indirectly in a process facilitating homologous recombination. Acts during mid- to late-horse-tail period. In Schizosaccharomyces pombe (strain 972 / ATCC 24843) (Fission yeast), this protein is Homologous-pairing protein 2 (meu13).